A 175-amino-acid polypeptide reads, in one-letter code: ATP synthase subunit b (175 aa).

The helical transmembrane segment at 19-39 (LVVGTIAFALLVFVLLKFVMP) threads the bilayer.

This sequence belongs to the ATPase B chain family. F-type ATPases have 2 components, F(1) - the catalytic core - and F(0) - the membrane proton channel. F(1) has five subunits: alpha(3), beta(3), gamma(1), delta(1), epsilon(1). F(0) has three main subunits: a(1), b(2) and c(10-14). The alpha and beta chains form an alternating ring which encloses part of the gamma chain. F(1) is attached to F(0) by a central stalk formed by the gamma and epsilon chains, while a peripheral stalk is formed by the delta and b chains.

The protein resides in the cell membrane. Its function is as follows. F(1)F(0) ATP synthase produces ATP from ADP in the presence of a proton or sodium gradient. F-type ATPases consist of two structural domains, F(1) containing the extramembraneous catalytic core and F(0) containing the membrane proton channel, linked together by a central stalk and a peripheral stalk. During catalysis, ATP synthesis in the catalytic domain of F(1) is coupled via a rotary mechanism of the central stalk subunits to proton translocation. Functionally, component of the F(0) channel, it forms part of the peripheral stalk, linking F(1) to F(0). The protein is ATP synthase subunit b of Salinispora tropica (strain ATCC BAA-916 / DSM 44818 / JCM 13857 / NBRC 105044 / CNB-440).